The following is a 521-amino-acid chain: Cytochrome P450 1A1 (521 aa).

Phe229 lines the substrate pocket. Cys463 lines the heme pocket.

The protein belongs to the cytochrome P450 family. It depends on heme as a cofactor.

The protein resides in the endoplasmic reticulum membrane. It localises to the microsome membrane. It catalyses the reaction an organic molecule + reduced [NADPH--hemoprotein reductase] + O2 = an alcohol + oxidized [NADPH--hemoprotein reductase] + H2O + H(+). Its function is as follows. Cytochromes P450 are a group of heme-thiolate monooxygenases. They oxidize a variety of structurally unrelated compounds, including steroids, fatty acids, and xenobiotics. The chain is Cytochrome P450 1A1 (cyp1a1) from Opsanus tau (Oyster toadfish).